A 286-amino-acid chain; its full sequence is uncharacterized protein (286 aa).

Positions 54, 128, and 162 each coordinate NADP(+). The active-site Proton donor is the Ser-178. NADP(+) is bound by residues Tyr-192, Lys-196, Ile-225, and Thr-227. The Proton acceptor role is filled by Tyr-192. Catalysis depends on Lys-196, which acts as the Lowers pKa of active site Tyr.

Belongs to the short-chain dehydrogenases/reductases (SDR) family.

This is an uncharacterized protein from Schizosaccharomyces pombe (strain 972 / ATCC 24843) (Fission yeast).